Consider the following 224-residue polypeptide: LexA repressor (224 aa).

The H-T-H motif DNA-binding region spans 31–51 (RAEIAAEFGFKSANAAEEHLQ). Residues S142 and K179 each act as for autocatalytic cleavage activity in the active site.

It belongs to the peptidase S24 family. Homodimer.

It catalyses the reaction Hydrolysis of Ala-|-Gly bond in repressor LexA.. Represses a number of genes involved in the response to DNA damage (SOS response), including recA and lexA. In the presence of single-stranded DNA, RecA interacts with LexA causing an autocatalytic cleavage which disrupts the DNA-binding part of LexA, leading to derepression of the SOS regulon and eventually DNA repair. This is LexA repressor from Paracidovorax citrulli (strain AAC00-1) (Acidovorax citrulli).